Here is a 321-residue protein sequence, read N- to C-terminus: Gibberellin 2-beta-dioxygenase 4 (321 aa).

In terms of domain architecture, Fe2OG dioxygenase spans 156-269 (DSDSVLRVNH…RLSTAYFAGP (114 aa)). His193, Asp195, and His250 together coordinate Fe cation. Arg260 is an active-site residue.

It belongs to the iron/ascorbate-dependent oxidoreductase family. GA2OX subfamily. Requires Fe(2+) as cofactor. Expressed at the base of the shoot apical meristem and developing leaf primordia.

It catalyses the reaction gibberellin A1 + 2-oxoglutarate + O2 = gibberellin A8 + succinate + CO2. It functions in the pathway plant hormone biosynthesis; gibberellin biosynthesis. Its function is as follows. Catalyzes the 2-beta-hydroxylation of several biologically active gibberellins, leading to the homeostatic regulation of their endogenous level. Catabolism of gibberellins (GAs) plays a central role in plant development. Converts GA9/GA20 to GA51/GA29 and GA4/GA1 to GA34/GA8. This is Gibberellin 2-beta-dioxygenase 4 (GA2OX4) from Arabidopsis thaliana (Mouse-ear cress).